The sequence spans 584 residues: A-type ATP synthase subunit A 2 (584 aa).

Residue 227–234 (GGFGTGKT) coordinates ATP.

This sequence belongs to the ATPase alpha/beta chains family. As to quaternary structure, has multiple subunits with at least A(3), B(3), C, D, E, F, H, I and proteolipid K(x).

It is found in the cell membrane. It catalyses the reaction ATP + H2O + 4 H(+)(in) = ADP + phosphate + 5 H(+)(out). Functionally, component of the A-type ATP synthase that produces ATP from ADP in the presence of a proton gradient across the membrane. The A chain is the catalytic subunit. The polypeptide is A-type ATP synthase subunit A 2 (Methanospirillum hungatei JF-1 (strain ATCC 27890 / DSM 864 / NBRC 100397 / JF-1)).